The chain runs to 264 residues: Chymotrypsin-like protease CTRL-1 (264 aa).

A signal peptide spans 1–18; the sequence is MLLLSLTLSLVLLGSSWG. The propeptide at 19-33 is activation peptide; the sequence is CGIPAIKPALSFSQR. 5 disulfide bridges follow: Cys19–Cys141, Cys60–Cys76, Cys155–Cys220, Cys187–Cys201, and Cys210–Cys239. The Peptidase S1 domain occupies 34-262; it reads IVNGENAVLG…FSTWINQVIA (229 aa). His75 functions as the Charge relay system in the catalytic mechanism. The N-linked (GlcNAc...) asparagine glycan is linked to Asn114. Catalysis depends on Asp121, which acts as the Charge relay system. The Charge relay system role is filled by Ser214.

It belongs to the peptidase S1 family.

This is Chymotrypsin-like protease CTRL-1 (CTRL) from Homo sapiens (Human).